We begin with the raw amino-acid sequence, 507 residues long: MVNIRPDETSSIILGQTAQYDQEVGVFSTGTVLQVGDGIARIHGPDGVTAGELVESEDGTVGIALNSEPDNAGAVSMGDGSTIQEGSSVKATGKIAQIPVSDAYLGRVANAPAQPTDGKGRIAASEPRLTESPAPGIISRRSVYEPMQTGLIATDPMIPTGRGQRELIIGDRQTGKTAVAIDTTPNQRGQNVICVYVAIGQKASPAAQVVSTFEERGAMEYTVAVAETANPPATSQYLAPYTGAALAEYFMYRKRHTLIIYDDPSKQAQAYRQMSLLPRRPPGREAHPGDVPHLHPRPPERAAKLSSQPGEGSTTASPTVETQAGDVSAYIPTNVTSTTDGQIFLSADLSNAGVRPATNVGISASRVGPAAQIKATKQVAGKSKSELAQFAEPEASAQFASDPDKATRNQSARGQRSRELLKQSQPAPLPVEEQVATTHAGASGFSDVSEIGQVQGSPAQSREYLVTNKPEPAEIVRPTKTFTERAETILKEAIKEHTESFSLKKQI.

170-177 (GDRQTGKT) is a binding site for ATP. 3 disordered regions span residues 278–325 (PRRP…TQAG), 392–430 (EPEA…APLP), and 452–471 (GQVQ…NKPE). Over residues 282–303 (PGREAHPGDVPHLHPRPPERAA) the composition is skewed to basic and acidic residues. The span at 305 to 322 (LSSQPGEGSTTASPTVET) shows a compositional bias: polar residues.

The protein belongs to the ATPase alpha/beta chains family. As to quaternary structure, F-type ATPases have 2 components, CF(1) - the catalytic core - and CF(0) - the membrane proton channel. CF(1) has five subunits: alpha(3), beta(3), gamma(1), delta(1), epsilon(1). CF(0) has four main subunits: a, b, b' and c.

It localises to the plastid. Its subcellular location is the chloroplast thylakoid membrane. The catalysed reaction is ATP + H2O + 4 H(+)(in) = ADP + phosphate + 5 H(+)(out). In terms of biological role, produces ATP from ADP in the presence of a proton gradient across the membrane. The alpha chain is a regulatory subunit. The polypeptide is ATP synthase subunit alpha, chloroplastic (Selaginella uncinata (Blue spike-moss)).